Here is a 379-residue protein sequence, read N- to C-terminus: Elongation factor Ts, mitochondrial (379 aa).

A mitochondrion-targeting transit peptide spans 1–33; that stretch reads MAWGQGAKRSILGLLFRSQHQTARAYSSSAFQT.

It belongs to the EF-Ts family.

The protein resides in the mitochondrion. Associates with the EF-Tu.GDP complex and induces the exchange of GDP to GTP. It remains bound to the aminoacyl-tRNA.EF-Tu.GTP complex up to the GTP hydrolysis stage on the ribosome. The polypeptide is Elongation factor Ts, mitochondrial (Zea mays (Maize)).